Reading from the N-terminus, the 1247-residue chain is E3 ubiquitin-protein ligase hecw-1 (1247 aa).

The 34-residue stretch at 602–635 (TPPESHWKTYLDAKKRKFYVNHVTKETRWTKPDT) folds into the WW 1 domain. A disordered region spans residues 633-659 (PDTLNNNHIEPETPVHKRLSDRSASPR). Residues 641–653 (IEPETPVHKRLSD) are compositionally biased toward basic and acidic residues. In terms of domain architecture, WW 2 spans 745-777 (QPLPSGWECITMNNRTVFLNHANKETSFYDPRI). One can recognise an HECT domain in the interval 914-1247 (DPFVLKKSRL…IVNGMSYSIE (334 aa)). The active-site Glycyl thioester intermediate is Cys1215.

As to expression, expressed in the nervous system throughout the body. In the anterior ganglion, expression is limited to the two lateral outer labial neurons OLLL and OLLR.

It is found in the cytoplasm. The enzyme catalyses S-ubiquitinyl-[E2 ubiquitin-conjugating enzyme]-L-cysteine + [acceptor protein]-L-lysine = [E2 ubiquitin-conjugating enzyme]-L-cysteine + N(6)-ubiquitinyl-[acceptor protein]-L-lysine.. It functions in the pathway protein modification; protein ubiquitination. Its function is as follows. E3 ubiquitin-protein ligase. Functions in the OLL neurons in the anterior ganglion to inhibit avoidance to microbial pathogens such as P.aeruginosa although worms do display avoidance behavior, vacating a P.aeruginosa lawn within 24 hours. Likely to act by inhibiting the neuropeptide receptor npr-1. The polypeptide is E3 ubiquitin-protein ligase hecw-1 (Caenorhabditis elegans).